We begin with the raw amino-acid sequence, 477 residues long: Ribulose bisphosphate carboxylase large chain (477 aa).

Residues 1–2 constitute a propeptide that is removed on maturation; it reads MS. P3 carries the post-translational modification N-acetylproline. An N6,N6,N6-trimethyllysine modification is found at K14. Residues N123 and T173 each contribute to the substrate site. K175 functions as the Proton acceptor in the catalytic mechanism. K177 lines the substrate pocket. Positions 201, 203, and 204 each coordinate Mg(2+). K201 carries the N6-carboxylysine modification. The active-site Proton acceptor is the H294. Positions 295, 327, and 379 each coordinate substrate.

Belongs to the RuBisCO large chain family. Type I subfamily. In terms of assembly, heterohexadecamer of 8 large chains and 8 small chains; disulfide-linked. The disulfide link is formed within the large subunit homodimers. Mg(2+) is required as a cofactor. Post-translationally, the disulfide bond which can form in the large chain dimeric partners within the hexadecamer appears to be associated with oxidative stress and protein turnover.

Its subcellular location is the plastid. It localises to the chloroplast. It catalyses the reaction 2 (2R)-3-phosphoglycerate + 2 H(+) = D-ribulose 1,5-bisphosphate + CO2 + H2O. The catalysed reaction is D-ribulose 1,5-bisphosphate + O2 = 2-phosphoglycolate + (2R)-3-phosphoglycerate + 2 H(+). Its function is as follows. RuBisCO catalyzes two reactions: the carboxylation of D-ribulose 1,5-bisphosphate, the primary event in carbon dioxide fixation, as well as the oxidative fragmentation of the pentose substrate in the photorespiration process. Both reactions occur simultaneously and in competition at the same active site. The protein is Ribulose bisphosphate carboxylase large chain of Solanum bulbocastanum (Wild potato).